The chain runs to 309 residues: Pantothenate kinase (309 aa).

92–99 (GSVAVGKT) lines the ATP pocket.

The protein belongs to the prokaryotic pantothenate kinase family.

The protein resides in the cytoplasm. The catalysed reaction is (R)-pantothenate + ATP = (R)-4'-phosphopantothenate + ADP + H(+). The protein operates within cofactor biosynthesis; coenzyme A biosynthesis; CoA from (R)-pantothenate: step 1/5. The sequence is that of Pantothenate kinase (coaA) from Lactiplantibacillus plantarum (strain ATCC BAA-793 / NCIMB 8826 / WCFS1) (Lactobacillus plantarum).